The following is a 479-amino-acid chain: U2 small nuclear ribonucleoprotein auxiliary factor 35 kDa subunit-related protein 1 (479 aa).

A disordered region spans residues M1 to L63. Over residues S20–R37 the composition is skewed to basic residues. Residues Q50–L63 are compositionally biased toward acidic residues. K67 is covalently cross-linked (Glycyl lysine isopeptide (Lys-Gly) (interchain with G-Cter in SUMO2)). Residues E171 to P199 form a C3H1-type 1 zinc finger. The RRM domain occupies P203–V309. The C3H1-type 2 zinc finger occupies R311 to R338. Residue S354 is modified to Phosphoserine. Residues D356 to K479 form a disordered region. 2 stretches are compositionally biased toward basic and acidic residues: residues N365–Y379 and P388–K403. S389 carries the phosphoserine modification. Composition is skewed to basic residues over residues K404 to S417 and S442 to R451.

It localises to the nucleus. The protein is U2 small nuclear ribonucleoprotein auxiliary factor 35 kDa subunit-related protein 1 of Homo sapiens (Human).